We begin with the raw amino-acid sequence, 252 residues long: Indole-3-glycerol phosphate synthase (252 aa).

This sequence belongs to the TrpC family.

It catalyses the reaction 1-(2-carboxyphenylamino)-1-deoxy-D-ribulose 5-phosphate + H(+) = (1S,2R)-1-C-(indol-3-yl)glycerol 3-phosphate + CO2 + H2O. The protein operates within amino-acid biosynthesis; L-tryptophan biosynthesis; L-tryptophan from chorismate: step 4/5. The protein is Indole-3-glycerol phosphate synthase of Bacillus licheniformis (strain ATCC 14580 / DSM 13 / JCM 2505 / CCUG 7422 / NBRC 12200 / NCIMB 9375 / NCTC 10341 / NRRL NRS-1264 / Gibson 46).